Here is a 456-residue protein sequence, read N- to C-terminus: Chromosomal replication initiator protein DnaA 1 (456 aa).

The interval 1–68 is domain I, interacts with DnaA modulators; the sequence is MRAWEEFLLL…KANLINNNGK (68 aa). A domain II region spans residues 68–101; sequence KPIRVRVTSLDKSTPFKESQIQQEKTAYFTMQYG. The tract at residues 102 to 320 is domain III, AAA+ region; that stretch reads DIDPQMSFAN…HALTTLAKRV (219 aa). 4 residues coordinate ATP: serine 150, glycine 152, lysine 153, and threonine 154. Residues 321 to 456 are domain IV, binds dsDNA; that stretch reads AYKKLSHQLL…AYQSLDLIVD (136 aa).

The protein belongs to the DnaA family. In terms of assembly, oligomerizes as a right-handed, spiral filament on DNA at oriC.

The protein resides in the cytoplasm. Functionally, plays an essential role in the initiation and regulation of chromosomal replication. ATP-DnaA binds to the origin of replication (oriC) to initiate formation of the DNA replication initiation complex once per cell cycle. Binds the DnaA box (a 9 base pair repeat at the origin) and separates the double-stranded (ds)DNA. Forms a right-handed helical filament on oriC DNA; dsDNA binds to the exterior of the filament while single-stranded (ss)DNA is stabiized in the filament's interior. The ATP-DnaA-oriC complex binds and stabilizes one strand of the AT-rich DNA unwinding element (DUE), permitting loading of DNA polymerase. After initiation quickly degrades to an ADP-DnaA complex that is not apt for DNA replication. Binds acidic phospholipids. This chain is Chromosomal replication initiator protein DnaA 1, found in Chlamydia muridarum (strain MoPn / Nigg).